A 53-amino-acid chain; its full sequence is Cytochrome c-552 (53 aa).

The heme c site is built by Cys19, Cys22, His23, and Met44.

In terms of processing, binds 1 heme c group covalently per subunit.

It localises to the cell membrane. In Schinkia azotoformans (Bacillus azotoformans), this protein is Cytochrome c-552.